Reading from the N-terminus, the 462-residue chain is BBSome complex member bbs-4 (462 aa).

The tract at residues Met1–Pro46 is disordered. TPR repeat units lie at residues Glu89–Asn122, Arg124–Asn156, Ala199–Asn232, Glu234–Asn266, Gln268–Asn300, Tyr335–Asn368, and Ala369–Pro402.

Belongs to the BBS4 family. Part of BBSome complex, that contains at least bbs-1, bbs-2, bbs-4, bbs-5, osm-12, bbs-8/ttc-8 and bbs-9. Interacts (via C-terminus) with bbs-5; the interaction is direct.

The protein resides in the cytoplasm. Its subcellular location is the cytoskeleton. It is found in the microtubule organizing center. The protein localises to the centrosome. It localises to the cell projection. The protein resides in the cilium membrane. Its function is as follows. Component of the BBSome complex. The BBSome complex is thought to function as a coat complex required for sorting of specific membrane proteins to the primary cilia. The BBSome complex is required for ciliogenesis but is dispensable for centriolar satellite function. Required for proper BBSome complex assembly and its ciliary localization. May be required for microtubule anchoring at the centrosome but not for microtubule nucleation. May be required for the dynein-mediated transport of pericentriolar proteins to the centrosome. Required, redundantly with bbs-5, for cilia biogenesis and both the assembly and movement of intraflagellar transport proteins along the ciliary axoneme. Plays a role in the removal of degraded mechanosensory receptors within the cilia. In Caenorhabditis elegans, this protein is BBSome complex member bbs-4.